The chain runs to 201 residues: Holliday junction resolvase RecU (201 aa).

Mg(2+) contacts are provided by T87, D89, D102, and Q121.

It belongs to the RecU family. Requires Mg(2+) as cofactor.

The protein resides in the cytoplasm. It catalyses the reaction Endonucleolytic cleavage at a junction such as a reciprocal single-stranded crossover between two homologous DNA duplexes (Holliday junction).. Its function is as follows. Endonuclease that resolves Holliday junction intermediates in genetic recombination. Cleaves mobile four-strand junctions by introducing symmetrical nicks in paired strands. Promotes annealing of linear ssDNA with homologous dsDNA. Required for DNA repair, homologous recombination and chromosome segregation. This is Holliday junction resolvase RecU from Levilactobacillus brevis (strain ATCC 367 / BCRC 12310 / CIP 105137 / JCM 1170 / LMG 11437 / NCIMB 947 / NCTC 947) (Lactobacillus brevis).